The following is an 892-amino-acid chain: DNA mismatch repair protein MutS (892 aa).

The disordered stretch occupies residues 663–684 (TNTSLREAAPTTTLSTSDQGQM). An ATP-binding site is contributed by 696–703 (GPNASGKS).

It belongs to the DNA mismatch repair MutS family.

Functionally, this protein is involved in the repair of mismatches in DNA. It is possible that it carries out the mismatch recognition step. This protein has a weak ATPase activity. The protein is DNA mismatch repair protein MutS of Nostoc punctiforme (strain ATCC 29133 / PCC 73102).